Here is a 107-residue protein sequence, read N- to C-terminus: Large ribosomal subunit protein P1 (107 aa).

Over residues 68–82 (PATAGAPAAAGAAAP) the composition is skewed to low complexity. The interval 68-107 (PATAGAPAAAGAAAPAEEKKEEKEEEKEESDEDMGFGLFD) is disordered. Acidic residues predominate over residues 90-101 (KEEEKEESDEDM).

Belongs to the eukaryotic ribosomal protein P1/P2 family. As to quaternary structure, P1 and P2 exist as dimers at the large ribosomal subunit.

It localises to the cytoplasm. In terms of biological role, plays an important role in the elongation step of protein synthesis. This Penicillium brevicompactum protein is Large ribosomal subunit protein P1.